Here is a 289-residue protein sequence, read N- to C-terminus: Purine nucleoside phosphorylase (289 aa).

Met1 bears the N-acetylmethionine mark. Phosphate-binding positions include Ser33, His64, and 84-86 (RFH). Tyr88 serves as a coordination point for a purine D-ribonucleoside. A phosphate-binding site is contributed by Ala116. 2 residues coordinate a purine D-ribonucleoside: Glu201 and Met219. Ser220 is a binding site for phosphate. Asn243 is an a purine D-ribonucleoside binding site. Position 251 is a phosphoserine (Ser251). Position 257 (His257) interacts with a purine D-ribonucleoside.

This sequence belongs to the PNP/MTAP phosphorylase family. As to quaternary structure, homotrimer. Expressed in red blood cells; overexpressed in red blood cells (cytoplasm) of patients with hereditary non-spherocytic hemolytic anemia of unknown etiology.

The protein resides in the cytoplasm. The enzyme catalyses inosine + phosphate = alpha-D-ribose 1-phosphate + hypoxanthine. The catalysed reaction is guanosine + phosphate = alpha-D-ribose 1-phosphate + guanine. It catalyses the reaction 2'-deoxyguanosine + phosphate = 2-deoxy-alpha-D-ribose 1-phosphate + guanine. It carries out the reaction 2'-deoxyinosine + phosphate = 2-deoxy-alpha-D-ribose 1-phosphate + hypoxanthine. Its pathway is purine metabolism; purine nucleoside salvage. Its activity is regulated as follows. Inhibited by 5'-deaza-1'-aza-2c-deoxy-1'-(9-methylene)-Immucilin-G (DADMe-ImmG). In terms of biological role, catalyzes the phosphorolytic breakdown of the N-glycosidic bond in the beta-(deoxy)ribonucleoside molecules, with the formation of the corresponding free purine bases and pentose-1-phosphate. Preferentially acts on 6-oxopurine nucleosides including inosine and guanosine. The sequence is that of Purine nucleoside phosphorylase (PNP) from Homo sapiens (Human).